The sequence spans 509 residues: tRNA-2-methylthio-N(6)-dimethylallyladenosine synthase (509 aa).

Residues 1-15 (MNEQQRLASQQANAS) are compositionally biased toward polar residues. The disordered stretch occupies residues 1–22 (MNEQQRLASQQANASTKKEEKD). An MTTase N-terminal domain is found at 66–184 (RKFYIRTYGC…LPYILKDAMF (119 aa)). 6 residues coordinate [4Fe-4S] cluster: cysteine 75, cysteine 111, cysteine 145, cysteine 221, cysteine 225, and cysteine 228. In terms of domain architecture, Radical SAM core spans 207–437 (RRGDIKAWVN…NELVNEFSAK (231 aa)). The region spanning 440-503 (KKYEGQIVEV…TWSLNGELVE (64 aa)) is the TRAM domain.

This sequence belongs to the methylthiotransferase family. MiaB subfamily. In terms of assembly, monomer. It depends on [4Fe-4S] cluster as a cofactor.

Its subcellular location is the cytoplasm. It catalyses the reaction N(6)-dimethylallyladenosine(37) in tRNA + (sulfur carrier)-SH + AH2 + 2 S-adenosyl-L-methionine = 2-methylsulfanyl-N(6)-dimethylallyladenosine(37) in tRNA + (sulfur carrier)-H + 5'-deoxyadenosine + L-methionine + A + S-adenosyl-L-homocysteine + 2 H(+). Functionally, catalyzes the methylthiolation of N6-(dimethylallyl)adenosine (i(6)A), leading to the formation of 2-methylthio-N6-(dimethylallyl)adenosine (ms(2)i(6)A) at position 37 in tRNAs that read codons beginning with uridine. The protein is tRNA-2-methylthio-N(6)-dimethylallyladenosine synthase of Bacillus cytotoxicus (strain DSM 22905 / CIP 110041 / 391-98 / NVH 391-98).